A 158-amino-acid polypeptide reads, in one-letter code: 3-hydroxyacyl-[acyl-carrier-protein] dehydratase FabZ (158 aa).

Residue His-57 is part of the active site.

The protein belongs to the thioester dehydratase family. FabZ subfamily.

It is found in the cytoplasm. The enzyme catalyses a (3R)-hydroxyacyl-[ACP] = a (2E)-enoyl-[ACP] + H2O. Its function is as follows. Involved in unsaturated fatty acids biosynthesis. Catalyzes the dehydration of short chain beta-hydroxyacyl-ACPs and long chain saturated and unsaturated beta-hydroxyacyl-ACPs. The sequence is that of 3-hydroxyacyl-[acyl-carrier-protein] dehydratase FabZ from Helicobacter acinonychis (strain Sheeba).